Reading from the N-terminus, the 837-residue chain is Semaphorin-4G (837 aa).

The N-terminal stretch at 1–17 is a signal peptide; sequence MWGRLWPLLFSFLTVTA. Over 18–673 the chain is Extracellular; sequence VPGPSLRRPS…GAQLAHDMRM (656 aa). The Sema domain maps to 35–503; the sequence is RLTISYEELS…AASGVLQFPL (469 aa). N-linked (GlcNAc...) asparagine glycosylation is found at asparagine 55, asparagine 111, and asparagine 126. A disulfide bridge links cysteine 104 with cysteine 115. 3 disulfide bridges follow: cysteine 133-cysteine 142, cysteine 268-cysteine 375, and cysteine 292-cysteine 335. Asparagine 386 carries an N-linked (GlcNAc...) asparagine glycan. The region spanning 505–556 is the PSI domain; sequence SCSRYQSCYDCILARDPYCGWDSSIHACMVATTVANRTELIQDIERGNRGCE. 2 cysteine pairs are disulfide-bonded: cysteine 506/cysteine 523 and cysteine 515/cysteine 532. 2 N-linked (GlcNAc...) asparagine glycosylation sites follow: asparagine 540 and asparagine 596. The region spanning 565–647 is the Ig-like C2-type domain; that stretch reads PPLKTRSVLR…RMLLASYSLT (83 aa). Cysteine 582 and cysteine 630 are joined by a disulfide. A helical transmembrane segment spans residues 674–694; that stretch reads FYVVAIAILGGLCLILASSLL. Over 695-837 the chain is Cytoplasmic; that stretch reads YVACLKGGRR…LVEQLDESSV (143 aa). Positions 721–776 are disordered; that stretch reads SAVQLQTVSGQCPGEEDEGDDGEGTGGLESGCLQIIPGEGAPAPPPPPPPPPPAEL. Residues 734 to 743 show a composition bias toward acidic residues; that stretch reads GEEDEGDDGE. The segment covering 762–774 has biased composition (pro residues); the sequence is PAPPPPPPPPPPA. Residues serine 794 and serine 836 each carry the phosphoserine modification.

It belongs to the semaphorin family. In terms of assembly, interacts with PLXNB2. In terms of tissue distribution, brain, spinal cord, and several sensory organs as well as specific populations of projection neurons.

It localises to the cell membrane. In terms of biological role, cell surface receptor for PLXNB2. May play a role in axon guidance. The protein is Semaphorin-4G (Sema4g) of Mus musculus (Mouse).